The following is a 278-amino-acid chain: 4-deoxy-L-threo-5-hexosulose-uronate ketol-isomerase (278 aa).

4 residues coordinate Zn(2+): H196, H198, E203, and H245.

This sequence belongs to the KduI family. The cofactor is Zn(2+).

The catalysed reaction is 5-dehydro-4-deoxy-D-glucuronate = 3-deoxy-D-glycero-2,5-hexodiulosonate. Its pathway is glycan metabolism; pectin degradation; 2-dehydro-3-deoxy-D-gluconate from pectin: step 4/5. Functionally, catalyzes the isomerization of 5-dehydro-4-deoxy-D-glucuronate to 3-deoxy-D-glycero-2,5-hexodiulosonate. This Shigella flexneri serotype 5b (strain 8401) protein is 4-deoxy-L-threo-5-hexosulose-uronate ketol-isomerase.